The chain runs to 207 residues: Guanylate kinase (207 aa).

Residues 4–184 enclose the Guanylate kinase-like domain; it reads GTLYIVSAPS…ALMDFKAILR (181 aa). ATP is bound at residue 11 to 18; sequence APSGAGKS.

This sequence belongs to the guanylate kinase family.

Its subcellular location is the cytoplasm. It catalyses the reaction GMP + ATP = GDP + ADP. Functionally, essential for recycling GMP and indirectly, cGMP. The protein is Guanylate kinase of Vibrio parahaemolyticus serotype O3:K6 (strain RIMD 2210633).